Consider the following 309-residue polypeptide: MSSVLRLLGRRICNPAAEKVRLSSSLSGGGDFPILNGHKAAQDLSKDTLKSQDITKEKEGQHKEVKKEFKIYRWNPDKPNSKPFLQSFFVDLSSCGPMVLDVLQKIKAEDDASLSYRRSCREGICGSCSMNIDGTNTVACLKPINPNTSKPTIITPLPHMYVIKDLVVDLTNFYQQYKSMEPWLKTRKPPKDGREHRQSPKDRKKLDGLYECILCACCTTSCPSYWWNPEEFPGPAALLQAYRWISDSRDEYREERLQAITESETKVYRCRAIKNCTATCPKGLNPASAILKMKSKHLLSDPLVRTESV.

Residues 1-22 (MSSVLRLLGRRICNPAAEKVRL) constitute a mitochondrion transit peptide. The 2Fe-2S ferredoxin-type domain maps to 69-160 (FKIYRWNPDK…PTIITPLPHM (92 aa)). Residues C120, C125, and C140 each contribute to the [2Fe-2S] cluster site. The 4Fe-4S ferredoxin-type domain maps to 202-232 (DRKKLDGLYECILCACCTTSCPSYWWNPEEF). 3 residues coordinate [4Fe-4S] cluster: C212, C215, and C218. A [3Fe-4S] cluster-binding site is contributed by C222. Residue W227 coordinates a ubiquinone. The [3Fe-4S] cluster site is built by C270 and C276. C280 is a binding site for [4Fe-4S] cluster.

It belongs to the succinate dehydrogenase/fumarate reductase iron-sulfur protein family. In terms of assembly, component of complex II composed of eight subunits in plants: four classical SDH subunits SDH1, SDH2, SDH3 and SDH4 (a flavoprotein (FP), an iron-sulfur protein (IP), and a cytochrome b composed of a large and a small subunit.), as well as four subunits unknown in mitochondria from bacteria and heterotrophic eukaryotes. [2Fe-2S] cluster serves as cofactor. Requires [3Fe-4S] cluster as cofactor. It depends on [4Fe-4S] cluster as a cofactor.

It localises to the mitochondrion inner membrane. It catalyses the reaction a quinone + succinate = fumarate + a quinol. It participates in carbohydrate metabolism; tricarboxylic acid cycle; fumarate from succinate (eukaryal route): step 1/1. In terms of biological role, iron-sulfur protein (IP) subunit of succinate dehydrogenase (SDH) that is involved in complex II of the mitochondrial electron transport chain and is responsible for transferring electrons from succinate to ubiquinone (coenzyme Q). This is Succinate dehydrogenase [ubiquinone] iron-sulfur subunit 3, mitochondrial (SDH2-3) from Arabidopsis thaliana (Mouse-ear cress).